A 147-amino-acid chain; its full sequence is Mineralocorticoid receptor (147 aa).

An NR LBD domain is found at 1 to 147 (FALSWRSYKH…SQALKVEFPA (147 aa)). 21-hydroxyprogesterone-binding residues include R6 and T134. Aldosterone contacts are provided by R6 and T134. Progesterone is bound by residues R6 and T134.

This sequence belongs to the nuclear hormone receptor family. NR3 subfamily.

It localises to the cytoplasm. Its subcellular location is the nucleus. Functionally, receptor for both mineralocorticoids (MC) such as aldosterone and glucocorticoids (GC) such as corticosterone or cortisol. Binds to mineralocorticoid response elements (MRE) and transactivates target genes. The effect of MC is to increase ion and water transport and thus raise extracellular fluid volume and blood pressure and lower potassium levels. The chain is Mineralocorticoid receptor (NR3C2) from Gallus gallus (Chicken).